Here is a 398-residue protein sequence, read N- to C-terminus: Phosphoglycerate kinase (398 aa).

Residues 21–23, arginine 36, 59–62, arginine 117, and arginine 150 each bind substrate; these read DFN and HFGR. Residues lysine 200, glutamate 321, and 351-354 each bind ATP; that span reads GGDS.

Belongs to the phosphoglycerate kinase family. Monomer.

It localises to the cytoplasm. The enzyme catalyses (2R)-3-phosphoglycerate + ATP = (2R)-3-phospho-glyceroyl phosphate + ADP. Its pathway is carbohydrate degradation; glycolysis; pyruvate from D-glyceraldehyde 3-phosphate: step 2/5. In Wolbachia sp. subsp. Drosophila simulans (strain wRi), this protein is Phosphoglycerate kinase.